A 316-amino-acid chain; its full sequence is 4-hydroxy-3-methylbut-2-enyl diphosphate reductase (316 aa).

Cys-12 lines the [4Fe-4S] cluster pocket. (2E)-4-hydroxy-3-methylbut-2-enyl diphosphate is bound by residues His-41 and His-74. His-41 and His-74 together coordinate dimethylallyl diphosphate. Residues His-41 and His-74 each coordinate isopentenyl diphosphate. Residue Cys-96 participates in [4Fe-4S] cluster binding. His-124 contributes to the (2E)-4-hydroxy-3-methylbut-2-enyl diphosphate binding site. His-124 serves as a coordination point for dimethylallyl diphosphate. His-124 contacts isopentenyl diphosphate. Glu-126 serves as the catalytic Proton donor. Thr-167 lines the (2E)-4-hydroxy-3-methylbut-2-enyl diphosphate pocket. Residue Cys-197 participates in [4Fe-4S] cluster binding. Positions 225, 226, 227, and 269 each coordinate (2E)-4-hydroxy-3-methylbut-2-enyl diphosphate. Residues Ser-225, Ser-226, Asn-227, and Ser-269 each contribute to the dimethylallyl diphosphate site. The isopentenyl diphosphate site is built by Ser-225, Ser-226, Asn-227, and Ser-269.

This sequence belongs to the IspH family. As to quaternary structure, homodimer. It depends on [4Fe-4S] cluster as a cofactor.

It catalyses the reaction isopentenyl diphosphate + 2 oxidized [2Fe-2S]-[ferredoxin] + H2O = (2E)-4-hydroxy-3-methylbut-2-enyl diphosphate + 2 reduced [2Fe-2S]-[ferredoxin] + 2 H(+). The enzyme catalyses dimethylallyl diphosphate + 2 oxidized [2Fe-2S]-[ferredoxin] + H2O = (2E)-4-hydroxy-3-methylbut-2-enyl diphosphate + 2 reduced [2Fe-2S]-[ferredoxin] + 2 H(+). Its pathway is isoprenoid biosynthesis; dimethylallyl diphosphate biosynthesis; dimethylallyl diphosphate from (2E)-4-hydroxy-3-methylbutenyl diphosphate: step 1/1. It functions in the pathway isoprenoid biosynthesis; isopentenyl diphosphate biosynthesis via DXP pathway; isopentenyl diphosphate from 1-deoxy-D-xylulose 5-phosphate: step 6/6. Functionally, catalyzes the conversion of 1-hydroxy-2-methyl-2-(E)-butenyl 4-diphosphate (HMBPP) into a mixture of isopentenyl diphosphate (IPP) and dimethylallyl diphosphate (DMAPP). Acts in the terminal step of the DOXP/MEP pathway for isoprenoid precursor biosynthesis. In Salmonella schwarzengrund (strain CVM19633), this protein is 4-hydroxy-3-methylbut-2-enyl diphosphate reductase.